The sequence spans 420 residues: CinA-like protein (420 aa).

This sequence belongs to the CinA family.

This Geotalea uraniireducens (strain Rf4) (Geobacter uraniireducens) protein is CinA-like protein.